A 612-amino-acid polypeptide reads, in one-letter code: Dihydroxy-acid dehydratase (612 aa).

D81 lines the Mg(2+) pocket. C122 is a [2Fe-2S] cluster binding site. Mg(2+) contacts are provided by D123 and K124. K124 carries the post-translational modification N6-carboxylysine. C193 serves as a coordination point for [2Fe-2S] cluster. Position 489 (E489) interacts with Mg(2+). The Proton acceptor role is filled by S515.

This sequence belongs to the IlvD/Edd family. As to quaternary structure, homodimer. It depends on [2Fe-2S] cluster as a cofactor. Mg(2+) serves as cofactor.

It carries out the reaction (2R)-2,3-dihydroxy-3-methylbutanoate = 3-methyl-2-oxobutanoate + H2O. The catalysed reaction is (2R,3R)-2,3-dihydroxy-3-methylpentanoate = (S)-3-methyl-2-oxopentanoate + H2O. The protein operates within amino-acid biosynthesis; L-isoleucine biosynthesis; L-isoleucine from 2-oxobutanoate: step 3/4. It functions in the pathway amino-acid biosynthesis; L-valine biosynthesis; L-valine from pyruvate: step 3/4. Functionally, functions in the biosynthesis of branched-chain amino acids. Catalyzes the dehydration of (2R,3R)-2,3-dihydroxy-3-methylpentanoate (2,3-dihydroxy-3-methylvalerate) into 2-oxo-3-methylpentanoate (2-oxo-3-methylvalerate) and of (2R)-2,3-dihydroxy-3-methylbutanoate (2,3-dihydroxyisovalerate) into 2-oxo-3-methylbutanoate (2-oxoisovalerate), the penultimate precursor to L-isoleucine and L-valine, respectively. In Xanthomonas campestris pv. campestris (strain 8004), this protein is Dihydroxy-acid dehydratase.